A 30-amino-acid chain; its full sequence is Cysteine-rich venom protein annuliferin-a (30 aa).

Belongs to the CRISP family. In terms of processing, contains 8 disulfide bonds. As to expression, expressed by the venom gland.

The protein localises to the secreted. Functionally, inhibits calcium-activated potassium channels (KCa), voltage-gated potassium channel (Kv), and the calcium release channel/ryanodine receptor (RyR). The sequence is that of Cysteine-rich venom protein annuliferin-a from Naja annulifera (Banded Egyptian cobra).